The chain runs to 343 residues: MKTNAGRFFEDYRLGETIAHAVPRTVSGGERALYHALYPARHALSSSDEFARACGLPAAPVDELMAFHLVFGKTVPDISLNAVANLGYAEGRWLKPVFPGDTLRAESTVIGLKENSNGASGVVWVRTRGLNQQGEAVLSYVRWVMVRKRDTAAPAPAPTVPELAGSVAASDLVIPEGLSFTDYDLTLAGEPHRWGDYAVGEKIDHVDGVTVEESEHMLATRLWQNTAKVHFDATNRPDGRRLIYGGHVISLARTLSFNGLANAQMIVALNAGAHANPCFAGDTVRAWSEVLDKAETADPGVGALRLRLVAMKHGTEPFVTRSEDGKYLPGVLLDLDYWALVPR.

Residues 47-116 (SDEFARACGL…STVIGLKENS (70 aa)) form the MaoC-like domain. Residues 60–63 (PVDE), 83–86 (VANL), and 94–96 (LKP) contribute to the substrate site.

It carries out the reaction (2R,3S)-beta-methylmalyl-CoA = 2-methylfumaryl-CoA + H2O. Its function is as follows. Involved in the ethylmalonyl-CoA pathway for acetate assimilation. Catalyzes the reversible hydration of mesaconyl-CoA (2-methylfumaryl-CoA) to yield beta-methylmalyl-CoA ((2R,3S)-beta-methylmalyl-CoA). The polypeptide is Mesaconyl-CoA hydratase (mch) (Cereibacter sphaeroides (strain ATCC 17023 / DSM 158 / JCM 6121 / CCUG 31486 / LMG 2827 / NBRC 12203 / NCIMB 8253 / ATH 2.4.1.) (Rhodobacter sphaeroides)).